The following is a 251-amino-acid chain: MKKAGLLFLVMIVIAVVAAGIGYWKLTGEESDTLRKIVLEQCLPNQQENQNPSPCAEVKPNAGYVVLKDRHGPLQYLLMPTYRINGTESPLLTDPSTPNFFWLAWQARDFMSQKYGQPVPDRAVSLAINSRTGRTQNHFHIHISCIRPDVREQLDNNLANISSRWLPLPGGLRGHEYLARRVTESELVQRSPFMMLAEEVPEAREHMGSYGLAMVRQSDNSFVLLATQRNLLTLNRASAEEIQDHQCEILR.

The helical transmembrane segment at 4-24 (AGLLFLVMIVIAVVAAGIGYW) threads the bilayer.

Belongs to the Cdh family.

It is found in the cell inner membrane. It carries out the reaction a CDP-1,2-diacyl-sn-glycerol + H2O = a 1,2-diacyl-sn-glycero-3-phosphate + CMP + 2 H(+). Its pathway is phospholipid metabolism; CDP-diacylglycerol degradation; phosphatidate from CDP-diacylglycerol: step 1/1. In Escherichia coli O127:H6 (strain E2348/69 / EPEC), this protein is CDP-diacylglycerol pyrophosphatase.